A 576-amino-acid polypeptide reads, in one-letter code: ATP-dependent RNA helicase has1 (576 aa).

Residues 1-94 (MGSAQDQTKK…STMGLSLPTD (94 aa)) form a disordered region. The span at 26–37 (RVVEADDQRELT) shows a compositional bias: basic and acidic residues. The segment covering 51-66 (PPTDETPDAEDVEQTE) has biased composition (acidic residues). The short motif at 98–126 (QKFDELNLSEPTMKAIRQMGFETMTEIQQ) is the Q motif element. The Helicase ATP-binding domain occupies 129-305 (IPPTLAGRDI…RISLKPGPLY (177 aa)). Residue 142–149 (AKTGSGKT) coordinates ATP. The DEAD box motif lies at 252–255 (DEAD). In terms of domain architecture, Helicase C-terminal spans 319 to 490 (GVDQGYIICE…DIQSQLEKLI (172 aa)). The tract at residues 555–576 (DKVQARRPYGSQNKSARFKRRA) is disordered.

This sequence belongs to the DEAD box helicase family. DDX18/HAS1 subfamily. Associates in the nucleolus with the 60S and pre-60S ribosomal subunits.

It localises to the nucleus. It is found in the nucleolus. The enzyme catalyses ATP + H2O = ADP + phosphate + H(+). In terms of biological role, ATP-dependent RNA helicase involved in 40S ribosomal subunit biogenesis. Required for the processing and cleavage of 35S pre-rRNA at sites A0, A1, and A2, leading to mature 18S rRNA. In Aspergillus terreus (strain NIH 2624 / FGSC A1156), this protein is ATP-dependent RNA helicase has1 (has1).